Here is a 305-residue protein sequence, read N- to C-terminus: UDP-3-O-acyl-N-acetylglucosamine deacetylase (305 aa).

Positions 78, 237, and 241 each coordinate Zn(2+). His264 serves as the catalytic Proton donor.

It belongs to the LpxC family. Requires Zn(2+) as cofactor.

The catalysed reaction is a UDP-3-O-[(3R)-3-hydroxyacyl]-N-acetyl-alpha-D-glucosamine + H2O = a UDP-3-O-[(3R)-3-hydroxyacyl]-alpha-D-glucosamine + acetate. It participates in glycolipid biosynthesis; lipid IV(A) biosynthesis; lipid IV(A) from (3R)-3-hydroxytetradecanoyl-[acyl-carrier-protein] and UDP-N-acetyl-alpha-D-glucosamine: step 2/6. Catalyzes the hydrolysis of UDP-3-O-myristoyl-N-acetylglucosamine to form UDP-3-O-myristoylglucosamine and acetate, the committed step in lipid A biosynthesis. The polypeptide is UDP-3-O-acyl-N-acetylglucosamine deacetylase (Ralstonia pickettii (strain 12J)).